The chain runs to 335 residues: UDP-3-O-acylglucosamine N-acyltransferase (335 aa).

The Proton acceptor role is filled by His-225.

It belongs to the transferase hexapeptide repeat family. LpxD subfamily. As to quaternary structure, homotrimer.

It catalyses the reaction a UDP-3-O-[(3R)-3-hydroxyacyl]-alpha-D-glucosamine + a (3R)-hydroxyacyl-[ACP] = a UDP-2-N,3-O-bis[(3R)-3-hydroxyacyl]-alpha-D-glucosamine + holo-[ACP] + H(+). The protein operates within bacterial outer membrane biogenesis; LPS lipid A biosynthesis. In terms of biological role, catalyzes the N-acylation of UDP-3-O-acylglucosamine using 3-hydroxyacyl-ACP as the acyl donor. Is involved in the biosynthesis of lipid A, a phosphorylated glycolipid that anchors the lipopolysaccharide to the outer membrane of the cell. This chain is UDP-3-O-acylglucosamine N-acyltransferase, found in Delftia acidovorans (strain DSM 14801 / SPH-1).